Here is a 315-residue protein sequence, read N- to C-terminus: Thioredoxin reductase (315 aa).

45–52 (EGNTPGGK) is a binding site for FAD. An intrachain disulfide couples cysteine 145 to cysteine 148. 288–297 (DCRSKSFRQI) lines the FAD pocket.

This sequence belongs to the class-II pyridine nucleotide-disulfide oxidoreductase family. Homodimer. FAD is required as a cofactor.

The protein resides in the cytoplasm. It carries out the reaction [thioredoxin]-dithiol + NADP(+) = [thioredoxin]-disulfide + NADPH + H(+). This chain is Thioredoxin reductase (trxB), found in Mycoplasma genitalium (strain ATCC 33530 / DSM 19775 / NCTC 10195 / G37) (Mycoplasmoides genitalium).